The primary structure comprises 371 residues: Protein arginine N-methyltransferase 1 (371 aa).

Residues 50–361 (KDYYFDSYAH…DLDFKGQLCE (312 aa)) enclose the SAM-dependent MTase PRMT-type domain. 4 residues coordinate S-adenosyl-L-methionine: His63, Arg72, Gly96, and Glu118. Position 72 (Arg72) interacts with S-adenosyl-L-homocysteine. Glu118 is an S-adenosyl-L-homocysteine binding site. Lys134 bears the N6-succinyllysine mark. A Glycyl lysine isopeptide (Lys-Gly) (interchain with G-Cter in ubiquitin) cross-link involves residue Lys145. Val146 and Glu147 together coordinate S-adenosyl-L-homocysteine. Glu147 lines the S-adenosyl-L-methionine pocket. Catalysis depends on residues Glu162 and Glu171. Lys228 and Lys233 each carry N6-acetyllysine. 2 positions are modified to phosphoserine: Ser304 and Ser307.

This sequence belongs to the class I-like SAM-binding methyltransferase superfamily. Protein arginine N-methyltransferase family. In terms of assembly, homodimer. Homooctamer; individual homodimers associates to form a homooctamer. Individual homodimers can associate to form a homohexamer. Heterodimer with PRMT8. Interacts with BTG1, BTG2, NFATC2IP and IFNAR1. Interacts with and methylates CHTOP, thereby enabling the interaction of CHTOP with the 5FMC complex. Interacts with ILF3 and SUPT5H. Interacts with and methylates FOXO1, leading to the nuclear retention of FOXO1 and the stimulation of FOXO1 transcriptional activity. Methylation of FOXO1 is increased upon oxidative stress. Interacts with and probably methylates ATXN2L. Component of the methylosome, a 20S complex containing at least CLNS1A/pICln, PRMT5/SKB1, WDR77/MEP50, PRMT1 and ERH. Interacts with DHX9 (via RGG region). Interacts (via N-terminus) with HABP4. Interacts with MAP3K5/ASK1; the interaction results in MAP3K5 methylation by PRMT1 which inhibits MAP3K5 activation. Interacts with TRIM48; the interaction results in ubiquitination of PRMT1 by TRIM48, leading to PRMT1 proteasomal degradation and activation of MAP3K5. Interacts with GATOR1 complex; this interaction is S-adenosyl-L-methionine (SAM) dependent and is perturbated by SAMTOR in a SAM-sensitive manner. Interacts with GFI1; promoting recognition and binding of MRE11 and TP53BP1 substrates by PRMT1. Post-translationally, polyubiquitinated at Lys-145 by the SCF(FBXL17) complex, leading to its subsequent degradation. Ubiquitination is regulated by acetylation at Lys-228 and Lys-233. Polyubiquitinated by E3 ubiquitin-protein ligase TRIM48, leading to suppression of MAP3K5/ASK1 methylation and subsequent MAP3K5 activation. Acetylation at Lys-228 and Lys-233 regulates ubiquitination by the SCF(FBXL17) complex. Acetylated at Lys-233 by p300/EP300. Deacetylated at Lys-228 and Lys-233 by SIRT1. Widely expressed. Expressed strongly in colorectal cancer cells (at protein level). Expressed strongly in colorectal cancer tissues compared to wild-type colon samples (at protein level). Expressed strongly in colorectal cancer tissues compared to wild-type colon samples.

It is found in the nucleus. Its subcellular location is the nucleoplasm. The protein localises to the cytoplasm. It localises to the cytosol. The protein resides in the lysosome membrane. The catalysed reaction is L-arginyl-[protein] + 2 S-adenosyl-L-methionine = N(omega),N(omega)-dimethyl-L-arginyl-[protein] + 2 S-adenosyl-L-homocysteine + 2 H(+). It catalyses the reaction L-arginyl-[protein] + S-adenosyl-L-methionine = N(omega)-methyl-L-arginyl-[protein] + S-adenosyl-L-homocysteine + H(+). The enzyme catalyses N(omega)-methyl-L-arginyl-[protein] + S-adenosyl-L-methionine = N(omega),N(omega)-dimethyl-L-arginyl-[protein] + S-adenosyl-L-homocysteine + H(+). In terms of biological role, arginine methyltransferase that methylates (mono and asymmetric dimethylation) the guanidino nitrogens of arginyl residues present in proteins such as ESR1, histone H2, H3 and H4, FMR1, ILF3, HNRNPA1, HNRNPD, NFATC2IP, SUPT5H, TAF15, EWS, HABP4, SERBP1, RBM15, FOXO1, CHTOP, MAP3K5/ASK1, MICU1 and NPRL2. Constitutes the main enzyme that mediates monomethylation and asymmetric dimethylation of histone H4 'Arg-3' (H4R3me1 and H4R3me2a, respectively), a specific tag for epigenetic transcriptional activation. May be involved in the regulation of TAF15 transcriptional activity, act as an activator of estrogen receptor (ER)-mediated transactivation, play a key role in neurite outgrowth and act as a negative regulator of megakaryocytic differentiation, by modulating p38 MAPK pathway. Methylates RBM15, promoting ubiquitination and degradation of RBM15. Methylates MRE11 and TP53BP1, promoting the DNA damage response. Methylates FOXO1 and retains it in the nucleus increasing its transcriptional activity. Methylates CHTOP and this methylation is critical for its 5-hydroxymethylcytosine (5hmC)-binding activity. Methylates MAP3K5/ASK1 at 'Arg-78' and 'Arg-80' which promotes association of MAP3K5 with thioredoxin and negatively regulates MAP3K5 association with TRAF2, inhibiting MAP3K5 stimulation and MAP3K5-induced activation of JNK. Methylates H4R3 in genes involved in glioblastomagenesis in a CHTOP- and/or TET1-dependent manner. Plays a role in regulating alternative splicing in the heart. Methylates NPRL2 at 'Arg-78' leading to inhibition of its GTPase activator activity and then the GATOR1 complex and consequently inducing timely mTORC1 activation under methionine-sufficient conditions. This Homo sapiens (Human) protein is Protein arginine N-methyltransferase 1.